A 742-amino-acid chain; its full sequence is Clamp-binding protein CrfC (742 aa).

Positions 41 to 45 (QLALP) are clamp-binding consensus. In terms of domain architecture, Dynamin-type G spans 66 to 402 (SRLEMVLAIV…LWEDSLFAQP (337 aa)). The segment at 76–83 (GTMKAGKS) is G1 motif. Residues 102 to 104 (MTA) are G2 motif. Residues 236–239 (DTPG) form a G3 motif region. The segment at 297–300 (NKFD) is G4 motif. A G5 motif region spans residues 331 to 334 (FPVS). A coiled-coil region spans residues 440–472 (RAHGLNVACEQLRQNIHQIEESLQLLQLNQAQV).

The protein belongs to the TRAFAC class dynamin-like GTPase superfamily. Dynamin/Fzo/YdjA family. In terms of assembly, forms homooligomers. Binds to the beta sliding clamp processivity factor (DnaN) in the presence and absence of DNA, may bind to the clamp itself as homodimers or trimers. Homooligomers may be able to bind more than 1 clamp complex.

The protein localises to the cytoplasm. Functionally, important for the colocalization of sister nascent DNA strands after replication fork passage during DNA replication, and for positioning and subsequent partitioning of sister chromosomes. Does not have GTPase activity on its own. The sequence is that of Clamp-binding protein CrfC (crfC) from Escherichia coli (strain K12).